Here is a 598-residue protein sequence, read N- to C-terminus: Transcription factor himD (598 aa).

The segment at residues 18–47 is a DNA-binding region (zn(2)-C6 fungal-type); the sequence is CQNCARAKIRCIRSVPTGSCDRCERLRKTC. The segment at 87-110 is disordered; that stretch reads TVSEASIDDKSPTTTPTTPRPPPD.

It is found in the nucleus. In terms of biological role, transcription factor that, with himB, probably co-regulates the him gene cluster that mediates the biosynthesis of himeic acid A, a ubiquitin-activating enzyme (E1) inhibitor. This Aspergillus japonicus protein is Transcription factor himD.